The primary structure comprises 164 residues: Phosphopantetheine adenylyltransferase (164 aa).

Thr9 is a binding site for substrate. ATP is bound by residues 9 to 10 (TF) and His17. Substrate contacts are provided by Lys41, Leu73, and Arg87. ATP contacts are provided by residues 88 to 90 (GLR), Glu98, and 123 to 129 (YMFISAT).

It belongs to the bacterial CoaD family. Homohexamer. Mg(2+) is required as a cofactor.

The protein resides in the cytoplasm. The catalysed reaction is (R)-4'-phosphopantetheine + ATP + H(+) = 3'-dephospho-CoA + diphosphate. The protein operates within cofactor biosynthesis; coenzyme A biosynthesis; CoA from (R)-pantothenate: step 4/5. Functionally, reversibly transfers an adenylyl group from ATP to 4'-phosphopantetheine, yielding dephospho-CoA (dPCoA) and pyrophosphate. The chain is Phosphopantetheine adenylyltransferase from Nitrosomonas eutropha (strain DSM 101675 / C91 / Nm57).